The chain runs to 425 residues: Ribosome biogenesis protein WDR12 homolog (425 aa).

The segment at Ile7–Glu93 is ubiquitin-like (UBL) domain. WD repeat units follow at residues Ile105–Thr142, Gly145–Glu187, Gly194–Asp233, Gly265–Gln303, Ala305–Val344, Ser350–Tyr390, and Gly394–Lys425. Residues Pro227–Lys253 are disordered. Positions Asp231–Lys253 are enriched in basic and acidic residues.

Belongs to the WD repeat WDR12/YTM1 family.

The protein resides in the nucleus. It localises to the nucleolus. It is found in the nucleoplasm. Functionally, required for maturation of ribosomal RNAs and formation of the large ribosomal subunit. The chain is Ribosome biogenesis protein WDR12 homolog from Ixodes scapularis (Black-legged tick).